A 158-amino-acid chain; its full sequence is Large ribosomal subunit protein uL15 (158 aa).

Disordered regions lie at residues 1-53 and 138-158; these read MRIH…FEGG and ESAG…SNNE. Residues 23–35 show a composition bias toward gly residues; it reads ISAGQGASGGFGM. Polar residues predominate over residues 145 to 158; sequence QDLSDTSNAPSNNE.

This sequence belongs to the universal ribosomal protein uL15 family. Part of the 50S ribosomal subunit.

Functionally, binds to the 23S rRNA. The chain is Large ribosomal subunit protein uL15 from Crocosphaera subtropica (strain ATCC 51142 / BH68) (Cyanothece sp. (strain ATCC 51142)).